Here is a 407-residue protein sequence, read N- to C-terminus: Imidazolonepropionase (407 aa).

Fe(3+)-binding residues include His74 and His76. His74 and His76 together coordinate Zn(2+). 4-imidazolone-5-propanoate is bound by residues Arg83, Tyr146, and His179. Tyr146 provides a ligand contact to N-formimidoyl-L-glutamate. His244 is a binding site for Fe(3+). His244 contributes to the Zn(2+) binding site. Gln247 is a 4-imidazolone-5-propanoate binding site. Asp319 contributes to the Fe(3+) binding site. Position 319 (Asp319) interacts with Zn(2+). N-formimidoyl-L-glutamate contacts are provided by Asn321 and Gly323. Thr324 serves as a coordination point for 4-imidazolone-5-propanoate.

Belongs to the metallo-dependent hydrolases superfamily. HutI family. It depends on Zn(2+) as a cofactor. The cofactor is Fe(3+).

Its subcellular location is the cytoplasm. The enzyme catalyses 4-imidazolone-5-propanoate + H2O = N-formimidoyl-L-glutamate. Its pathway is amino-acid degradation; L-histidine degradation into L-glutamate; N-formimidoyl-L-glutamate from L-histidine: step 3/3. Functionally, catalyzes the hydrolytic cleavage of the carbon-nitrogen bond in imidazolone-5-propanoate to yield N-formimidoyl-L-glutamate. It is the third step in the universal histidine degradation pathway. This is Imidazolonepropionase from Salmonella arizonae (strain ATCC BAA-731 / CDC346-86 / RSK2980).